A 104-amino-acid polypeptide reads, in one-letter code: ATP-dependent Clp protease adapter protein ClpS (104 aa).

The disordered stretch occupies residues 1–20; the sequence is MSPDPHEDLGDVLTEPTQKT.

This sequence belongs to the ClpS family. Binds to the N-terminal domain of the chaperone ClpA.

Its function is as follows. Involved in the modulation of the specificity of the ClpAP-mediated ATP-dependent protein degradation. This Desulfatibacillum aliphaticivorans protein is ATP-dependent Clp protease adapter protein ClpS.